A 96-amino-acid chain; its full sequence is Protein Vpr (96 aa).

The interval 1–42 (MEQAPEDQGPQREPYNEWALELLEELKNEAVRHFPRLWLHGL) is homooligomerization. 2 positions are modified to phosphoserine; by host: Ser-79 and Ser-96.

Belongs to the HIV-1 VPR protein family. In terms of assembly, homooligomer, may form homodimer. Interacts with p6-gag region of the Pr55 Gag precursor protein through a (Leu-X-X)4 motif near the C-terminus of the P6gag protein. Interacts with host UNG. May interact with host RAD23A/HHR23A. Interacts with host VPRBP/DCAF1, leading to hijack the CUL4A-RBX1-DDB1-DCAF1/VPRBP complex, mediating ubiquitination of host proteins such as TERT and ZGPAT and arrest of the cell cycle in G2 phase. Post-translationally, phosphorylated on several residues by host. These phosphorylations regulate VPR activity for the nuclear import of the HIV-1 pre-integration complex.

It localises to the virion. The protein resides in the host nucleus. The protein localises to the host extracellular space. In terms of biological role, during virus replication, may deplete host UNG protein, and incude G2-M cell cycle arrest. Acts by targeting specific host proteins for degradation by the 26S proteasome, through association with the cellular CUL4A-DDB1 E3 ligase complex by direct interaction with host VPRPB/DCAF-1. Cell cycle arrest reportedly occurs within hours of infection and is not blocked by antiviral agents, suggesting that it is initiated by the VPR carried into the virion. Additionally, VPR induces apoptosis in a cell cycle dependent manner suggesting that these two effects are mechanistically linked. Detected in the serum and cerebrospinal fluid of AIDS patient, VPR may also induce cell death to bystander cells. Functionally, during virus entry, plays a role in the transport of the viral pre-integration (PIC) complex to the host nucleus. This function is crucial for viral infection of non-dividing macrophages. May act directly at the nuclear pore complex, by binding nucleoporins phenylalanine-glycine (FG)-repeat regions. The protein is Protein Vpr of Human immunodeficiency virus type 1 group M subtype G (isolate SE6165) (HIV-1).